The sequence spans 111 residues: Probable 4-amino-4-deoxy-L-arabinose-phosphoundecaprenol flippase subunit ArnE (111 aa).

3 helical membrane-spanning segments follow: residues 38 to 58 (LWLG…LLVL), 61 to 81 (LPVG…TLAA), and 91 to 111 (PRHW…GSAA). The EamA domain maps to 40 to 109 (LGLALICMGA…IISGIIILGS (70 aa)).

This sequence belongs to the ArnE family. Heterodimer of ArnE and ArnF.

Its subcellular location is the cell inner membrane. The protein operates within bacterial outer membrane biogenesis; lipopolysaccharide biosynthesis. Its function is as follows. Translocates 4-amino-4-deoxy-L-arabinose-phosphoundecaprenol (alpha-L-Ara4N-phosphoundecaprenol) from the cytoplasmic to the periplasmic side of the inner membrane. The polypeptide is Probable 4-amino-4-deoxy-L-arabinose-phosphoundecaprenol flippase subunit ArnE (Salmonella enteritidis PT4 (strain P125109)).